The following is a 338-amino-acid chain: NLP effector protein 6 (338 aa).

The first 19 residues, 1–19 (MRFTTIFWISLTVLATVRA), serve as a signal peptide directing secretion. Positions 68–119 (LTLSPSASSPAKRNVTLPPDTTMRPDPRQTEPPTEAPTPASTPAPTPDPGPW) are disordered. An N-linked (GlcNAc...) asparagine glycan is attached at N81. Residues 101-117 (TEAPTPASTPAPTPDPG) show a composition bias toward pro residues. The short motif at 205–215 (AIMYSWYFPKD) is the Conserved undecapeptide motif I element. The Hepta-peptide GHRHDWE motif II motif lies at 222–227 (GHRHDW).

The protein belongs to the Necrosis inducing protein (NPP1) family.

It localises to the secreted. Functionally, secreted effector that contributes strongly to virulence during infection by P.capsici. Causes large necrotic areas in both host C.annuum and non-host N.benthamiana. This Phytophthora capsici protein is NLP effector protein 6.